The following is an 84-amino-acid chain: Putative antitoxin RelB4 (84 aa).

Functionally, antitoxin component of a type II toxin-antitoxin (TA) system. Its cognate toxin is RelE4 (Potential). In Methanocaldococcus jannaschii (strain ATCC 43067 / DSM 2661 / JAL-1 / JCM 10045 / NBRC 100440) (Methanococcus jannaschii), this protein is Putative antitoxin RelB4 (relB4).